Here is a 276-residue protein sequence, read N- to C-terminus: Small ribosomal subunit protein uS2 (276 aa).

Disordered stretches follow at residues 209 to 233 (AQEA…AADV) and 252 to 276 (VDWS…SSWE). The segment covering 211–231 (EAAAAAQAAKETAEPTTEGAA) has biased composition (low complexity).

The protein belongs to the universal ribosomal protein uS2 family. As to quaternary structure, component of the small ribosomal subunit. Mature ribosomes consist of a small (40S) and a large (60S) subunit. The 40S subunit contains about 33 different proteins and 1 molecule of RNA (18S). The 60S subunit contains about 49 different proteins and 3 molecules of RNA (25S, 5.8S and 5S). Interacts with RPS21.

The protein localises to the cytoplasm. Its function is as follows. Required for the assembly and/or stability of the 40S ribosomal subunit. Required for the processing of the 20S rRNA-precursor to mature 18S rRNA in a late step of the maturation of 40S ribosomal subunits. The chain is Small ribosomal subunit protein uS2 from Mycosarcoma maydis (Corn smut fungus).